A 139-amino-acid chain; its full sequence is Holo-[acyl-carrier-protein] synthase (139 aa).

Residues D9 and E63 each contribute to the Mg(2+) site.

Belongs to the P-Pant transferase superfamily. AcpS family. Mg(2+) is required as a cofactor.

It localises to the cytoplasm. It catalyses the reaction apo-[ACP] + CoA = holo-[ACP] + adenosine 3',5'-bisphosphate + H(+). Its function is as follows. Transfers the 4'-phosphopantetheine moiety from coenzyme A to a Ser of acyl-carrier-protein. This chain is Holo-[acyl-carrier-protein] synthase, found in Wigglesworthia glossinidia brevipalpis.